Consider the following 838-residue polypeptide: E3 ubiquitin-protein ligase RNF19A (838 aa).

Residues Asp-128–Gly-351 are TRIAD supradomain. Zn(2+)-binding residues include Cys-132, Cys-135, Cys-150, His-152, Cys-155, Cys-158, Cys-176, Cys-179, Cys-219, Cys-224, Cys-241, Cys-246, Cys-251, Cys-254, His-259, Cys-264, Cys-301, and Cys-304. The RING-type 1 zinc-finger motif lies at Cys-132–Cys-179. An IBR-type zinc finger spans residues Glu-199–Cys-264. Residues Cys-301–Cys-332 form an RING-type 2; atypical zinc finger. Cys-316 is a catalytic residue. Residues Cys-321, Cys-324, Cys-329, Cys-332, His-340, and Cys-347 each contribute to the Zn(2+) site. 2 consecutive transmembrane segments (helical) span residues Leu-368–Ile-388 and Val-424–Ala-444. 2 disordered regions span residues Ser-622–Lys-685 and Gln-700–Ala-721. The residue at position 631 (Ser-631) is a Phosphoserine. Residues Ser-631 to Ser-644 are compositionally biased toward low complexity. The interval Ala-660–Ile-838 is interaction with CASR. Basic residues predominate over residues Lys-671–Asn-683. Residues Gln-700 to Met-717 show a composition bias toward polar residues.

It belongs to the RBR family. RNF19 subfamily. As to quaternary structure, interacts with UBE2L3 and UBE2L6. Also interacts with transcription factor Sp1. Interacts with SNCAIP, CASR and VCP.

The protein resides in the membrane. The protein localises to the cytoplasm. It localises to the cytoskeleton. It is found in the microtubule organizing center. Its subcellular location is the centrosome. It carries out the reaction [E2 ubiquitin-conjugating enzyme]-S-ubiquitinyl-L-cysteine + [acceptor protein]-L-lysine = [E2 ubiquitin-conjugating enzyme]-L-cysteine + [acceptor protein]-N(6)-ubiquitinyl-L-lysine.. It functions in the pathway protein modification; protein ubiquitination. Its function is as follows. E3 ubiquitin-protein ligase which accepts ubiquitin from E2 ubiquitin-conjugating enzymes UBE2L3 and UBE2L6 in the form of a thioester and then directly transfers the ubiquitin to targeted substrates, such as SNCAIP or CASR. This Sus scrofa (Pig) protein is E3 ubiquitin-protein ligase RNF19A (RNF19A).